The sequence spans 266 residues: Interleukin-1 beta (266 aa).

The propeptide occupies 1–114; sequence MAAVPELTSE…KTDADNFMSD (114 aa).

Belongs to the IL-1 family. As to quaternary structure, monomer. In its precursor form, weakly interacts with full-length MEFV; the mature cytokine does not interact at all. Interacts with integrins ITGAV:ITGBV and ITGA5:ITGB1; integrin-binding is required for IL1B signaling. Interacts with cargo receptor TMED10; the interaction is direct and is required for the secretion of IL1B mature form. Interacts with HSP90AB1; the interaction facilitates cargo translocation into the ERGIC. Interacts with HSP90B1; the interaction facilitates cargo translocation into the ERGIC.

Its subcellular location is the cytoplasm. It is found in the cytosol. The protein resides in the secreted. The protein localises to the lysosome. It localises to the extracellular exosome. Potent pro-inflammatory cytokine. Initially discovered as the major endogenous pyrogen, induces prostaglandin synthesis, neutrophil influx and activation, T-cell activation and cytokine production, B-cell activation and antibody production, and fibroblast proliferation and collagen production. Promotes Th17 differentiation of T-cells. Synergizes with IL12/interleukin-12 to induce IFNG synthesis from T-helper 1 (Th1) cells. Plays a role in angiogenesis by inducing VEGF production synergistically with TNF and IL6. Involved in transduction of inflammation downstream of pyroptosis: its mature form is specifically released in the extracellular milieu by passing through the gasdermin-D (GSDMD) pore. In Canis lupus familiaris (Dog), this protein is Interleukin-1 beta (IL1B).